Reading from the N-terminus, the 360-residue chain is Peptide chain release factor 1 (360 aa).

An N5-methylglutamine modification is found at Q235. Residues 285–295 show a composition bias toward polar residues; the sequence is AQQASEASTRK. Residues 285–305 are disordered; that stretch reads AQQASEASTRKSLIGSGDRSD.

This sequence belongs to the prokaryotic/mitochondrial release factor family. Methylated by PrmC. Methylation increases the termination efficiency of RF1.

The protein localises to the cytoplasm. In terms of biological role, peptide chain release factor 1 directs the termination of translation in response to the peptide chain termination codons UAG and UAA. The polypeptide is Peptide chain release factor 1 (Thiobacillus denitrificans (strain ATCC 25259 / T1)).